We begin with the raw amino-acid sequence, 513 residues long: Matrix metalloproteinase-27 (513 aa).

The first 17 residues, 1 to 17 (MKRLLLLFLFFITFSSA), serve as a signal peptide directing secretion. Positions 18 to 98 (FPLVRMTENE…PRCGVPDVGQ (81 aa)) are cleaved as a propeptide — activation peptide. N55 carries an N-linked (GlcNAc...) asparagine glycan. The Cysteine switch motif lies at 89-96 (PRCGVPDV). A Zn(2+)-binding site is contributed by C91. N110 is a glycosylation site (N-linked (GlcNAc...) asparagine). The Ca(2+) site is built by D121 and D155. Zn(2+) is bound at residue H165. Ca(2+) is bound by residues D173, G174, and V178. Position 181 (H181) interacts with Zn(2+). Ca(2+) contacts are provided by G188 and D192. Zn(2+) is bound at residue H194. 2 residues coordinate Ca(2+): D196 and E199. Residue H216 coordinates Zn(2+). E217 is an active-site residue. Residues H220 and H226 each coordinate Zn(2+). 4 Hemopexin repeats span residues 276–325 (PHAC…WPSL), 326–371 (PADL…GFPG), 373–421 (VKKI…FPGI), and 422–465 (SIRV…WFQC). C279 and C465 are disulfide-bonded. D286 contributes to the Ca(2+) binding site. D377 and D426 together coordinate Ca(2+). N-linked (GlcNAc...) asparagine glycosylation is present at N452. Residues 466 to 513 (KEPKNSSFGFDINKEKAHSGGIKILYHKSLSLFIFGIVHLLKNTSIYQ) form a required for retention in the endoplasmic reticulum region.

The protein belongs to the peptidase M10A family. Ca(2+) serves as cofactor. Requires Zn(2+) as cofactor. N-glycosylated. In terms of tissue distribution, expressed in B-cells. Expressed in a subset of endometrial macrophages related to menstruation and in ovarian and peritoneal endometriotic lesions (at protein level).

It is found in the endoplasmic reticulum. Functionally, matrix metalloproteinases degrade protein components of the extracellular matrix such as fibronectin, laminin, gelatins and/or collagens. This is Matrix metalloproteinase-27 (MMP27) from Homo sapiens (Human).